A 562-amino-acid polypeptide reads, in one-letter code: Carboxylesterase 1E (562 aa).

A signal peptide spans 1–19 (MCLSALILVSLAAFTAGAG). N-linked (GlcNAc...) asparagine glycosylation is present at asparagine 80. Cysteine 88 and cysteine 117 form a disulfide bridge. Serine 222 functions as the Acyl-ester intermediate in the catalytic mechanism. A disulfide bond links cysteine 274 and cysteine 285. Asparagine 276 carries an N-linked (GlcNAc...) asparagine glycan. Residues glutamate 354 and histidine 467 each act as charge relay system in the active site. A glycan (N-linked (GlcNAc...) asparagine) is linked at asparagine 490. A Prevents secretion from ER motif is present at residues 559 to 562 (HTEL).

It belongs to the type-B carboxylesterase/lipase family.

The protein localises to the endoplasmic reticulum lumen. It is found in the microsome membrane. The enzyme catalyses a carboxylic ester + H2O = an alcohol + a carboxylate + H(+). The catalysed reaction is all-trans-retinyl hexadecanoate + H2O = all-trans-retinol + hexadecanoate + H(+). In terms of biological role, involved in the detoxification of xenobiotics and in the activation of ester and amide prodrugs. Hydrolyzes retinyl esters. In Mus musculus (Mouse), this protein is Carboxylesterase 1E.